The sequence spans 180 residues: Large ribosomal subunit protein uL6 (180 aa).

The protein belongs to the universal ribosomal protein uL6 family. As to quaternary structure, part of the 50S ribosomal subunit.

Functionally, this protein binds to the 23S rRNA, and is important in its secondary structure. It is located near the subunit interface in the base of the L7/L12 stalk, and near the tRNA binding site of the peptidyltransferase center. In Borrelia garinii subsp. bavariensis (strain ATCC BAA-2496 / DSM 23469 / PBi) (Borreliella bavariensis), this protein is Large ribosomal subunit protein uL6.